The chain runs to 861 residues: Probable beta-glucosidase A (861 aa).

An N-terminal signal peptide occupies residues 1 to 19 (MKLGWIEVAALAAASVVSA). N-linked (GlcNAc...) asparagine glycans are attached at residues asparagine 62, asparagine 212, and asparagine 253. Aspartate 281 is a catalytic residue. 10 N-linked (GlcNAc...) asparagine glycosylation sites follow: asparagine 316, asparagine 323, asparagine 355, asparagine 443, asparagine 524, asparagine 543, asparagine 565, asparagine 669, asparagine 713, and asparagine 846.

The protein belongs to the glycosyl hydrolase 3 family.

Its subcellular location is the secreted. It catalyses the reaction Hydrolysis of terminal, non-reducing beta-D-glucosyl residues with release of beta-D-glucose.. Its pathway is glycan metabolism; cellulose degradation. In terms of biological role, beta-glucosidases are one of a number of cellulolytic enzymes involved in the degradation of cellulosic biomass. Catalyzes the last step releasing glucose from the inhibitory cellobiose. The polypeptide is Probable beta-glucosidase A (bglA) (Aspergillus flavus (strain ATCC 200026 / FGSC A1120 / IAM 13836 / NRRL 3357 / JCM 12722 / SRRC 167)).